Reading from the N-terminus, the 160-residue chain is Cytochrome c-type biogenesis protein CcmE (160 aa).

Topologically, residues 1 to 8 (MNPRRKKR) are cytoplasmic. The helical; Signal-anchor for type II membrane protein transmembrane segment at 9–29 (LGVVLAILFGLSATIGLIIYA) threads the bilayer. Topologically, residues 30–160 (LNQNMDLFYT…SQEQKQGSDQ (131 aa)) are periplasmic. The heme site is built by histidine 128 and tyrosine 132.

The protein belongs to the CcmE/CycJ family.

The protein localises to the cell inner membrane. Functionally, heme chaperone required for the biogenesis of c-type cytochromes. Transiently binds heme delivered by CcmC and transfers the heme to apo-cytochromes in a process facilitated by CcmF and CcmH. In Vibrio cholerae serotype O1 (strain ATCC 39541 / Classical Ogawa 395 / O395), this protein is Cytochrome c-type biogenesis protein CcmE.